Here is a 229-residue protein sequence, read N- to C-terminus: 2,3-bisphosphoglycerate-dependent phosphoglycerate mutase 2 (229 aa).

Residues 12–19, 25–26, R65, 92–95, K103, and 119–120 contribute to the substrate site; these read RHGESVAN, TG, ERHY, and RR. H13 (tele-phosphohistidine intermediate) is an active-site residue. E92 functions as the Proton donor/acceptor in the catalytic mechanism.

This sequence belongs to the phosphoglycerate mutase family. BPG-dependent PGAM subfamily.

It carries out the reaction (2R)-2-phosphoglycerate = (2R)-3-phosphoglycerate. It participates in carbohydrate degradation; glycolysis; pyruvate from D-glyceraldehyde 3-phosphate: step 3/5. In terms of biological role, catalyzes the interconversion of 2-phosphoglycerate and 3-phosphoglycerate. This is 2,3-bisphosphoglycerate-dependent phosphoglycerate mutase 2 from Lactobacillus johnsonii (strain CNCM I-12250 / La1 / NCC 533).